The chain runs to 443 residues: MPYIPHTPAEIREMLDAVGAPDVDALFAEIPAALRPQSFDLAKGATEMAVRAAMEKLSAKNRTDLTSFLGGGFYDHYVPAASDLLLSRGEFYTAYTPYQPEASQGTLQAIFEYQTAVCRLMDMECSNAGVYDGGTALYEALMMAVRHTRRKKAVVSETVSPIYRIVLATYTKNLHLDLVVVPHKNGLDDFEALTAAVDGDTAAIVVQNPNFFGSVQDFTALFDHAREKGAVSVISCYPVLQTVLKTPGAMGADIATAEGQSLGLPLSFGGPYLGIMTCKKSLVRQMPGRIAGRTKDAAGRTGYVLTLQAREQHIRRQKATSNICSNQALCALRALINLCLTGNEGLSRQAARSIENANYAAWKLGAIPGVKLLNEAPFGNEFAAVFPVNAKQVARMLMDGGIVPGFPLGRYYQGLENALLICCTEKHDRADIDRLARRLENAL.

This sequence belongs to the GcvP family. N-terminal subunit subfamily. In terms of assembly, the glycine cleavage system is composed of four proteins: P, T, L and H. In this organism, the P 'protein' is a heterodimer of two subunits.

The enzyme catalyses N(6)-[(R)-lipoyl]-L-lysyl-[glycine-cleavage complex H protein] + glycine + H(+) = N(6)-[(R)-S(8)-aminomethyldihydrolipoyl]-L-lysyl-[glycine-cleavage complex H protein] + CO2. In terms of biological role, the glycine cleavage system catalyzes the degradation of glycine. The P protein binds the alpha-amino group of glycine through its pyridoxal phosphate cofactor; CO(2) is released and the remaining methylamine moiety is then transferred to the lipoamide cofactor of the H protein. The protein is Probable glycine dehydrogenase (decarboxylating) subunit 1 of Solidesulfovibrio magneticus (strain ATCC 700980 / DSM 13731 / RS-1) (Desulfovibrio magneticus).